Reading from the N-terminus, the 283-residue chain is Urease accessory protein UreD 2 (283 aa).

Over residues 1-11 the composition is skewed to basic and acidic residues; sequence MGRRAPDRLDR. The interval 1 to 30 is disordered; it reads MGRRAPDRLDRGVTTTSPRTQAPPQAGRGV. A compositionally biased stretch (polar residues) spans 13–23; the sequence is VTTTSPRTQAP.

The protein belongs to the UreD family. In terms of assembly, ureD, UreF and UreG form a complex that acts as a GTP-hydrolysis-dependent molecular chaperone, activating the urease apoprotein by helping to assemble the nickel containing metallocenter of UreC. The UreE protein probably delivers the nickel.

Its subcellular location is the cytoplasm. In terms of biological role, required for maturation of urease via the functional incorporation of the urease nickel metallocenter. This is Urease accessory protein UreD 2 from Saccharopolyspora erythraea (strain ATCC 11635 / DSM 40517 / JCM 4748 / NBRC 13426 / NCIMB 8594 / NRRL 2338).